The sequence spans 347 residues: Heat-inducible transcription repressor HrcA (347 aa).

The protein belongs to the HrcA family.

Negative regulator of class I heat shock genes (grpE-dnaK-dnaJ and groELS operons). Prevents heat-shock induction of these operons. In Lactiplantibacillus plantarum (strain ATCC BAA-793 / NCIMB 8826 / WCFS1) (Lactobacillus plantarum), this protein is Heat-inducible transcription repressor HrcA.